The primary structure comprises 122 residues: Small ribosomal subunit protein uS13 (122 aa).

The disordered stretch occupies residues 94-122 (RGLPVRGQKTKTNARTRKGPRKTVAGKRK).

It belongs to the universal ribosomal protein uS13 family. As to quaternary structure, part of the 30S ribosomal subunit. Forms a loose heterodimer with protein S19. Forms two bridges to the 50S subunit in the 70S ribosome.

Functionally, located at the top of the head of the 30S subunit, it contacts several helices of the 16S rRNA. In the 70S ribosome it contacts the 23S rRNA (bridge B1a) and protein L5 of the 50S subunit (bridge B1b), connecting the 2 subunits; these bridges are implicated in subunit movement. Contacts the tRNAs in the A and P-sites. The protein is Small ribosomal subunit protein uS13 of Syntrophotalea carbinolica (strain DSM 2380 / NBRC 103641 / GraBd1) (Pelobacter carbinolicus).